The chain runs to 300 residues: ETS homologous factor (300 aa).

Residues 29–115 form the PNT domain; sequence STCNVSSGFF…SNLQHLKWNG (87 aa). The tract at residues 183–202 is disordered; that stretch reads ESPDMKKEQDPPAKCHTKKH. Basic and acidic residues predominate over residues 185-195; that stretch reads PDMKKEQDPPA. Positions 207–289 form a DNA-binding region, ETS; it reads THLWEFIRDI…DGRRLVYKFG (83 aa).

The protein belongs to the ETS family.

The protein resides in the nucleus. Its function is as follows. Transcriptional activator that may play a role in regulating epithelial cell differentiation and proliferation. May act as a repressor for a specific subset of ETS/AP-1-responsive genes, and as a modulator of the nuclear response to mitogen-activated protein kinase signaling cascades. Binds to DNA sequences containing the consensus nucleotide core sequence GGAA. Involved in regulation of TNFRSF10B/DR5 expression through Ets-binding sequences on the TNFRSF10B/DR5 promoter. The chain is ETS homologous factor (EHF) from Pan troglodytes (Chimpanzee).